Reading from the N-terminus, the 591-residue chain is Aspartate--tRNA ligase (591 aa).

Position 171 (glutamate 171) interacts with L-aspartate. Positions 195–198 (QLFK) are aspartate. L-aspartate is bound at residue arginine 217. ATP contacts are provided by residues 217–219 (RDE) and glutamine 226. Histidine 448 is a binding site for L-aspartate. Position 482 (glutamate 482) interacts with ATP. An L-aspartate-binding site is contributed by arginine 489. Position 534-537 (534-537 (GLDR)) interacts with ATP.

The protein belongs to the class-II aminoacyl-tRNA synthetase family. Type 1 subfamily. In terms of assembly, homodimer.

The protein localises to the cytoplasm. The enzyme catalyses tRNA(Asp) + L-aspartate + ATP = L-aspartyl-tRNA(Asp) + AMP + diphosphate. Functionally, catalyzes the attachment of L-aspartate to tRNA(Asp) in a two-step reaction: L-aspartate is first activated by ATP to form Asp-AMP and then transferred to the acceptor end of tRNA(Asp). The chain is Aspartate--tRNA ligase from Aliivibrio salmonicida (strain LFI1238) (Vibrio salmonicida (strain LFI1238)).